Here is a 236-residue protein sequence, read N- to C-terminus: uncharacterized protein (236 aa).

Over residues 1-17 (MSVSSLLQPNTYNINSK) the composition is skewed to polar residues. The tract at residues 1 to 94 (MSVSSLLQPN…GVKGTTGGTI (94 aa)) is disordered. A compositionally biased stretch (low complexity) spans 18-35 (SQSLSNTPSNPTSQTNTL). Residues 58-91 (GPSGPKGDKGDPGSKGETGSQGIKGDPGVKGTTG) enclose the Collagen-like domain.

This sequence belongs to the sputnik virus V6 family.

This is an uncharacterized protein from Sputnik virophage.